A 107-amino-acid polypeptide reads, in one-letter code: UPF0060 membrane protein RPB_2370 (107 aa).

4 consecutive transmembrane segments (helical) span residues 5 to 25 (IIYV…WGWL), 31 to 51 (VWWL…LTLV), 61 to 81 (AAYG…VEGV), and 85 to 105 (RWDV…LWGP).

This sequence belongs to the UPF0060 family.

Its subcellular location is the cell inner membrane. In Rhodopseudomonas palustris (strain HaA2), this protein is UPF0060 membrane protein RPB_2370.